A 296-amino-acid chain; its full sequence is MSDKQINLVIVTGMSGAGKTVAIQSFEDLGYFTVDNMPPALVPKFLELLERTNETQKVALVVDMRSRRFFKEINSILDHIELNANLKLRILFLDATDSELVSRYKETRRSHPLAADGRVLDGIRRERELLVPLKSMSQHVVNTTDLTPRQLRKVISDQFSSESDQASFRIEVMSFGFKYGLPLDADLVFDVRFLPNPYYQVALREQTGLDQAVFDYVMTHQESEAFYNHLLDLIVPILPAYQKEGKSVLTIAIGCTGGQHRSVAFAHRLAQDLTADWPLHESHRDINRRKETVNRS.

Residue 13–20 (GMSGAGKT) participates in ATP binding. A GTP-binding site is contributed by 63–66 (DMRS).

Belongs to the RapZ-like family.

Displays ATPase and GTPase activities. This is Nucleotide-binding protein SZO_12220 from Streptococcus equi subsp. zooepidemicus (strain H70).